The following is a 169-amino-acid chain: Cell division inhibitor SulA (169 aa).

Residues 106–112 (ALRTGNY) form a ftsZ binding region. Residues 162–169 (KIHSNLYH) form a lon protease binding region.

Belongs to the SulA family. In terms of assembly, interacts with FtsZ. Is rapidly cleaved and degraded by the Lon protease once DNA damage is repaired.

Component of the SOS system and an inhibitor of cell division. Accumulation of SulA causes rapid cessation of cell division and the appearance of long, non-septate filaments. In the presence of GTP, binds a polymerization-competent form of FtsZ in a 1:1 ratio, thus inhibiting FtsZ polymerization and therefore preventing it from participating in the assembly of the Z ring. This mechanism prevents the premature segregation of damaged DNA to daughter cells during cell division. This chain is Cell division inhibitor SulA, found in Escherichia coli O7:K1 (strain IAI39 / ExPEC).